The following is a 745-amino-acid chain: Elongation factor G, mitochondrial (745 aa).

Residues 40 to 317 (ERIRNIGISA…AVLDYLPNPG (278 aa)) enclose the tr-type G domain. Residues 49–56 (AHIDSGKT), 116–120 (DTPGH), and 170–173 (NKLD) contribute to the GTP site.

Belongs to the TRAFAC class translation factor GTPase superfamily. Classic translation factor GTPase family. EF-G/EF-2 subfamily.

Its subcellular location is the mitochondrion. It functions in the pathway protein biosynthesis; polypeptide chain elongation. Mitochondrial GTPase that catalyzes the GTP-dependent ribosomal translocation step during translation elongation. During this step, the ribosome changes from the pre-translocational (PRE) to the post-translocational (POST) state as the newly formed A-site-bound peptidyl-tRNA and P-site-bound deacylated tRNA move to the P and E sites, respectively. Catalyzes the coordinated movement of the two tRNA molecules, the mRNA and conformational changes in the ribosome. Essential during development as it acts as a retrograde signal from mitochondria to the nucleus to slow down cell proliferation if mitochondrial energy output is low. This is Elongation factor G, mitochondrial from Drosophila melanogaster (Fruit fly).